A 228-amino-acid chain; its full sequence is Ribonuclease 3 (228 aa).

The 130-residue stretch at 3-132 folds into the RNase III domain; sequence IRPLEEHLGI…FLGALYLDQG (130 aa). Glu45 serves as a coordination point for Mg(2+). Asp49 is an active-site residue. Residues Asp118 and Glu121 each coordinate Mg(2+). Glu121 is a catalytic residue. One can recognise a DRBM domain in the interval 158–227; it reads DYKSQLQEFV…AKNALDSINN (70 aa). The interval 205 to 228 is disordered; the sequence is GTGRTKKEAEQRAAKNALDSINNS.

This sequence belongs to the ribonuclease III family. As to quaternary structure, homodimer. Mg(2+) serves as cofactor.

It is found in the cytoplasm. The catalysed reaction is Endonucleolytic cleavage to 5'-phosphomonoester.. Its function is as follows. Digests double-stranded RNA. Involved in the processing of primary rRNA transcript to yield the immediate precursors to the large and small rRNAs (23S and 16S). Processes some mRNAs, and tRNAs when they are encoded in the rRNA operon. Processes pre-crRNA and tracrRNA of type II CRISPR loci if present in the organism. The chain is Ribonuclease 3 from Oceanobacillus iheyensis (strain DSM 14371 / CIP 107618 / JCM 11309 / KCTC 3954 / HTE831).